We begin with the raw amino-acid sequence, 348 residues long: Holliday junction branch migration complex subunit RuvB (348 aa).

The large ATPase domain (RuvB-L) stretch occupies residues 3–183 (DDGLVSAAAS…FGFTAHLDFY (181 aa)). ATP is bound by residues L22, R23, G64, K67, T68, S69, 130–132 (EDF), R173, Y183, and R220. T68 is a Mg(2+) binding site. The segment at 184-254 (DADELARVLT…IAQAALRIYD (71 aa)) is small ATPAse domain (RuvB-S). Residues 257-348 (GLGLDRLDRA…TQVSLFTEGE (92 aa)) are head domain (RuvB-H). 2 residues coordinate DNA: R312 and R317.

This sequence belongs to the RuvB family. Homohexamer. Forms an RuvA(8)-RuvB(12)-Holliday junction (HJ) complex. HJ DNA is sandwiched between 2 RuvA tetramers; dsDNA enters through RuvA and exits via RuvB. An RuvB hexamer assembles on each DNA strand where it exits the tetramer. Each RuvB hexamer is contacted by two RuvA subunits (via domain III) on 2 adjacent RuvB subunits; this complex drives branch migration. In the full resolvosome a probable DNA-RuvA(4)-RuvB(12)-RuvC(2) complex forms which resolves the HJ.

Its subcellular location is the cytoplasm. The catalysed reaction is ATP + H2O = ADP + phosphate + H(+). Functionally, the RuvA-RuvB-RuvC complex processes Holliday junction (HJ) DNA during genetic recombination and DNA repair, while the RuvA-RuvB complex plays an important role in the rescue of blocked DNA replication forks via replication fork reversal (RFR). RuvA specifically binds to HJ cruciform DNA, conferring on it an open structure. The RuvB hexamer acts as an ATP-dependent pump, pulling dsDNA into and through the RuvAB complex. RuvB forms 2 homohexamers on either side of HJ DNA bound by 1 or 2 RuvA tetramers; 4 subunits per hexamer contact DNA at a time. Coordinated motions by a converter formed by DNA-disengaged RuvB subunits stimulates ATP hydrolysis and nucleotide exchange. Immobilization of the converter enables RuvB to convert the ATP-contained energy into a lever motion, pulling 2 nucleotides of DNA out of the RuvA tetramer per ATP hydrolyzed, thus driving DNA branch migration. The RuvB motors rotate together with the DNA substrate, which together with the progressing nucleotide cycle form the mechanistic basis for DNA recombination by continuous HJ branch migration. Branch migration allows RuvC to scan DNA until it finds its consensus sequence, where it cleaves and resolves cruciform DNA. In Frankia casuarinae (strain DSM 45818 / CECT 9043 / HFP020203 / CcI3), this protein is Holliday junction branch migration complex subunit RuvB.